A 122-amino-acid chain; its full sequence is Small ribosomal subunit protein uS13 (122 aa).

The tract at residues 95–122 (GLPVRGQRTHTNARTRKGPAKPIAGKKK) is disordered.

The protein belongs to the universal ribosomal protein uS13 family. In terms of assembly, part of the 30S ribosomal subunit. Forms a loose heterodimer with protein S19. Forms two bridges to the 50S subunit in the 70S ribosome.

Located at the top of the head of the 30S subunit, it contacts several helices of the 16S rRNA. In the 70S ribosome it contacts the 23S rRNA (bridge B1a) and protein L5 of the 50S subunit (bridge B1b), connecting the 2 subunits; these bridges are implicated in subunit movement. Contacts the tRNAs in the A and P-sites. This Caulobacter sp. (strain K31) protein is Small ribosomal subunit protein uS13.